Consider the following 272-residue polypeptide: MMEKLIITAAICGAEVTKEHNPAVPYTVEEIAREAESAYKAGASIIHLHVREDDGTPTQDKERFRKCIEAIREKCPDVIIQPSTGGAVGMTDLERLQPTELHPEMATLDCGTCNFGGDEIFVNTENTIKNFGKILIERGVKPEIEVFDKGMIDYAIRYQKQGFIQKPMHFDFVLGVQMSASARDLVFMSESIPEGSTWTVAGVGRHQFQMAALAIVMGGHVRVGFEDNVYIDKGILAKSNGELVERVVRLAKELGREIATPDEARQILSLKK.

(5S)-5-amino-3-oxohexanoate is bound at residue Glu-15. Zn(2+) contacts are provided by His-47 and His-49. Residues Ser-83, Gly-86, and Thr-107 each coordinate (5S)-5-amino-3-oxohexanoate. Glu-226 contacts Zn(2+).

This sequence belongs to the BKACE family. Kce subfamily. Homotetramer. Zn(2+) serves as cofactor.

The enzyme catalyses (5S)-5-amino-3-oxohexanoate + acetyl-CoA = (3S)-3-aminobutanoyl-CoA + acetoacetate. It participates in amino-acid degradation; L-lysine degradation via acetate pathway. With respect to regulation, 3-fold increase in activity by addition of 10 mM 2-mercaptoethanol. Addition of CoCl(2) and to a lesser extent MnCl(2) increases the activity but not MgCl(2). Inhibited by phosphate buffer but not by 5,5'-dithio-2-nitrobenzoic acid. Involved in the anaerobic fermentation of lysine. Catalyzes the reversible reaction between 3-keto-5-aminohexanoate (KAH) and acetyl-CoA to form 3-aminobutyryl-CoA and acetoacetate. The reaction involves the deprotonation of KAH, the nucleophilic addition onto acetyl-CoA and the intramolecular transfer of the CoA moiety. It can also use beta-alanyl-CoA as substrate. This chain is 3-keto-5-aminohexanoate cleavage enzyme, found in Fusobacterium nucleatum subsp. nucleatum (strain ATCC 25586 / DSM 15643 / BCRC 10681 / CIP 101130 / JCM 8532 / KCTC 2640 / LMG 13131 / VPI 4355).